The chain runs to 321 residues: G-protein coupled receptor homolog ECRF3 (321 aa).

The Extracellular segment spans residues 1–34 (MEVKLDFSSEDFSNYSYNYSGDIYYGDVAPCVVN). N-linked (GlcNAc...) asparagine; by host glycans are attached at residues asparagine 14 and asparagine 18. A helical membrane pass occupies residues 35–51 (FLISESALAFIYVLMFL). Residues 52–76 (CNAIGNSLVLRTFLKYRAQAQSFDY) lie on the Cytoplasmic side of the membrane. Residues 77-93 (LMMGFCLNSLFLAGYLL) form a helical membrane-spanning segment. At 94 to 124 (MRLLRMFEIFMNTELCKLEAFFLNLSIYWSP) the chain is on the extracellular side. N-linked (GlcNAc...) asparagine; by host glycosylation is present at asparagine 117. Residues 125 to 141 (FILVFISVLRCLLIFCA) traverse the membrane as a helical segment. Over 142–149 (TRLWVKKT) the chain is Cytoplasmic. Residues 150–166 (LIGQVFLCCSFVLACFG) form a helical membrane-spanning segment. The Extracellular portion of the chain corresponds to 167-196 (ALPHVMVTSYYEPSSCIEEDGVLTEQLRTK). A helical transmembrane segment spans residues 197-215 (LNTFHTWYSFAGPLFITVI). Topologically, residues 216-234 (CYSMSCYKLFKTKLSKRAE) are cytoplasmic. A helical transmembrane segment spans residues 235 to 251 (VVTIITMTTLLFIVFCI). Topologically, residues 252–286 (PYYIMESIDTLLRVGVIEETCAKRSAIVYGIQCTY) are extracellular. A helical transmembrane segment spans residues 287-303 (MLLVLYYCMLPLMFAMF). The Cytoplasmic segment spans residues 304-321 (GSLFRQRMAAWCKTICHC).

It belongs to the G-protein coupled receptor 1 family.

It localises to the host cell membrane. Its function is as follows. May be highly relevant to the process of cellular transformation and rapid T-cell proliferation effected by HVS during latent infections of T-cells in susceptible hosts. This Saimiri sciureus (Common squirrel monkey) protein is G-protein coupled receptor homolog ECRF3 (74).